The sequence spans 567 residues: Probable serine/threonine-protein kinase WNK6 (567 aa).

Residues 28–285 (IRYKEVIGKG…AKELLLDPFL (258 aa)) form the Protein kinase domain. ATP-binding positions include 108-111 (TELF) and Lys158. Residue Asp175 is the Proton acceptor of the active site. Basic and acidic residues predominate over residues 499–509 (VDATKGEDKSS). Residues 499–528 (VDATKGEDKSSIQEVEEATEPVSLEEEERL) are disordered. Positions 512–525 (EVEEATEPVSLEEE) are enriched in acidic residues. Positions 519–553 (PVSLEEEERLRQELEEIEAKYQEDMKEIATKREEA) form a coiled coil.

It belongs to the protein kinase superfamily. Ser/Thr protein kinase family. WNK subfamily.

The enzyme catalyses L-seryl-[protein] + ATP = O-phospho-L-seryl-[protein] + ADP + H(+). The catalysed reaction is L-threonyl-[protein] + ATP = O-phospho-L-threonyl-[protein] + ADP + H(+). Its function is as follows. May regulate flowering time by modulating the photoperiod pathway. In Arabidopsis thaliana (Mouse-ear cress), this protein is Probable serine/threonine-protein kinase WNK6 (WNK6).